Here is a 272-residue protein sequence, read N- to C-terminus: Type II secretion system protein C (272 aa).

The Cytoplasmic portion of the chain corresponds to 1–16 (MNISKLPPLSPSVIRR). The chain crosses the membrane as a helical span at residues 17–35 (ILFYLLMLLFCQQLAMIFW). Topologically, residues 36 to 272 (RVGLPDNSPV…DIYMEFGGDE (237 aa)) are periplasmic.

It belongs to the GSP C family.

It localises to the cell inner membrane. Involved in a type II secretion system (T2SS, formerly general secretion pathway, GSP) for the export of proteins. Required for the translocation of the multiple pectic enzymes. This Dickeya chrysanthemi (Pectobacterium chrysanthemi) protein is Type II secretion system protein C (outC).